The primary structure comprises 459 residues: N-chimaerin (459 aa).

Residue Ala2 is modified to N-acetylalanine. An SH2 domain is found at 49-135 (EYHGMISREE…IETKAAEYIA (87 aa)). Thr192 carries the phosphothreonine modification. A Phorbol-ester/DAG-type zinc finger spans residues 205 to 255 (VHNFKVHTFRGPHWCEYCANFMWGLIAQGVKCADCGLNVHKQCSKMVPNDC). The 192-residue stretch at 268–459 (CDLTTLVKAH…LLIKNEDILF (192 aa)) folds into the Rho-GAP domain. Thr340 carries the phosphothreonine modification.

As to quaternary structure, interacts with EPHA4; effector of EPHA4 in axon guidance linking EPHA4 activation to RAC1 regulation. May also interact with EPHB1 and EPHB2. In terms of processing, phosphorylated. Phosphorylation is EPHA4 kinase activity-dependent.

Functionally, GTPase-activating protein for p21-rac and a phorbol ester receptor. May play an important role in neuronal signal-transduction mechanisms. Involved in the assembly of neuronal locomotor circuits as a direct effector of EPHA4 in axon guidance. This is N-chimaerin (Chn1) from Mus musculus (Mouse).